Reading from the N-terminus, the 884-residue chain is E3 SUMO-protein ligase SIZ1 (884 aa).

Residues 11 to 45 (LSYFRIKELKDVLTQLGLSKQGKKQELVDRILTLL) form the SAP domain. A disordered region spans residues 84–103 (LASKGQVSSDTSNLKVKGEP). Positions 88–97 (GQVSSDTSNL) are enriched in polar residues. Residue K100 forms a Glycyl lysine isopeptide (Lys-Gly) (interchain with G-Cter in SUMO) linkage. Residues 112–168 (KVRCVCGNSLETDSMIQCEDPRCHVWQHVGCVILPDKPMDGNPPLPESFYCEICRLT) form a PHD-type zinc finger. Residues 346–429 (SDSDIEVVAD…FNRITSKMKH (84 aa)) form an SP-RING-type zinc finger. Zn(2+) contacts are provided by C379, H381, C402, and C405. Residue K488 forms a Glycyl lysine isopeptide (Lys-Gly) (interchain with G-Cter in SUMO) linkage. Disordered regions lie at residues 753–778 (PSLQIFLPTKPDASAQSGFKNQADMS), 792–824 (GDSASGNHGDPATTNGINSSHQMSTREGSMDTT), and 836–869 (DSRQDKAKKQRSDNPFSFPRQKRSNNEQDHQTRH). Polar residues-rich tracts occupy residues 766–778 (SAQSGFKNQADMS) and 803–824 (ATTNGINSSHQMSTREGSMDTT). Residues 837 to 847 (SRQDKAKKQRS) are compositionally biased toward basic and acidic residues.

It belongs to the PIAS family. In terms of assembly, interacts (via PHD domain) with SCE1, GTE3 and GTE5. Post-translationally, autosumoylated at Lys-100 and Lys-488. In terms of tissue distribution, ubiquitous.

It localises to the nucleus speckle. It functions in the pathway protein modification; protein sumoylation. Its function is as follows. E3 SUMO protein ligase involved in regulation processes. Mediates SUMO/ attachment to PHR1, a MYB transcriptional activator controlling the phosphate deficiency responses. Functions as an upstream negative regulator of salicylic acid (SA) accumulation and subsequent SA-mediated systemic acquired resistance (SAR) signaling. Probably not involved in jasmonic acid (JA)-mediated defense response. Participates in abiotic stress-induced sumoylation. Controls heat shock-induced SUMO1 and SUMO2 conjugation and facilitates basal thermotolerance. Involved in freezing tolerance by mediating sumoylation of ICE1, a transcription activator of the cold signaling regulator CBF3/DREB1A. Acts as a positive regulator of drought stress tolerance. Acts as a floral repressor that promotes FLC expression by repressing FLD activity through sumoylation. Acts as a negative regulator of abscisic acid (ABA) signaling through ABI5 sumoylation. Mediates sumoylation of SCE1, GTE3 and GTE5. Functions as a negative regulator of SnRK1 signaling through sumoylation of several components of the SnRK1 complex. This is E3 SUMO-protein ligase SIZ1 from Arabidopsis thaliana (Mouse-ear cress).